The primary structure comprises 605 residues: Adenine deaminase (605 aa).

Belongs to the metallo-dependent hydrolases superfamily. Adenine deaminase family. Mn(2+) serves as cofactor.

It catalyses the reaction adenine + H2O + H(+) = hypoxanthine + NH4(+). The sequence is that of Adenine deaminase from Staphylothermus marinus (strain ATCC 43588 / DSM 3639 / JCM 9404 / F1).